Here is a 553-residue protein sequence, read N- to C-terminus: HTH-type transcriptional regulator SgrR (553 aa).

The HTH marR-type domain occupies 1 to 117 (MPSSRLQQQF…LSQIERRFRQ (117 aa)). Residues 26-49 (LQELANVLHCSKRHIRSLLNNMQK) constitute a DNA-binding region (H-T-H motif). The tract at residues 163-494 (EPEADLAHHW…NDLSKEVSQW (332 aa)) is solute-binding.

In terms of biological role, activates the small RNA gene sgrS under glucose-phosphate stress conditions as well as yfdZ. Represses its own transcription under both stress and non-stress conditions. Might act as a sensor of the intracellular accumulation of phosphoglucose by binding these molecules in its C-terminal solute-binding domain. The polypeptide is HTH-type transcriptional regulator SgrR (Photorhabdus laumondii subsp. laumondii (strain DSM 15139 / CIP 105565 / TT01) (Photorhabdus luminescens subsp. laumondii)).